Here is a 711-residue protein sequence, read N- to C-terminus: Hydroperoxide isomerase ALOXE3 (711 aa).

The region spanning Ala2 to Arg119 is the PLAT domain. The 593-residue stretch at Arg119 to Ile711 folds into the Lipoxygenase domain. Fe cation contacts are provided by His408, His413, His588, Asn592, and Ile711.

Belongs to the lipoxygenase family. The cofactor is Fe cation.

The protein resides in the cytoplasm. It catalyses the reaction a hydroperoxyeicosatetraenoate = a hydroxy-epoxy-eicosatetraenoate. It carries out the reaction a hydroperoxyeicosatetraenoate = an oxoeicosatetraenoate + H2O. The enzyme catalyses (12R)-hydroperoxy-(5Z,8Z,10E,14Z)-eicosatetraenoate = (8R)-hydroxy-(11R,12R)-epoxy-(5Z,9E,14Z)-eicosatrienoate. The catalysed reaction is (12S)-hydroperoxy-(5Z,8Z,10E,14Z)-eicosatetraenoate = (8R)-hydroxy-(11S,12S)-epoxy-(5Z,9E,14Z)-eicosatrienoate. It catalyses the reaction (12S)-hydroperoxy-(5Z,8Z,10E,14Z)-eicosatetraenoate = (10R)-hydroxy-(11S,12S)-epoxy-(5Z,8Z,14Z)-eicosatrienoate. It carries out the reaction (15S)-hydroperoxy-(5Z,8Z,11Z,13E)-eicosatetraenoate = (13R)-hydroxy-(14S,15S)-epoxy-(5Z,8Z,11Z)-eicosatrienoate. The enzyme catalyses (5S)-hydroperoxy-(6E,8Z,11Z,14Z)-eicosatetraenoate = 7R-hydroxy-5S,6S-epoxy-(8Z,11Z,14Z)-eicosatrienoate. The catalysed reaction is (13S)-hydroperoxy-(9Z,11E)-octadecadienoate = 11-hydroxy-(12S,13S)-epoxy-(9Z)-octadecenoate. It catalyses the reaction N-[omega-(9R)-hydroperoxy-(10E,12Z)-octadecadienoyloxy]acyl-beta-D-glucosyl-(1&lt;-&gt;1)-octadecasphing-4E-enine = a N-[omega-(9R,10R)-epoxy-(13R)-hydroxy-(11E)-octadecenoyloxy]acyl-beta-D-glucosyl-(1&lt;-&gt;1)-sphing-4E-enine. It carries out the reaction a N-[omega-(9R)-hydroperoxy-(10E,12Z)-octadecadienoyloxy]-acylsphin-4E-enine = a N-[omega-(9R,10R)-epoxy-(13R)-hydroxy-(11E)-octadecenoyloxy]-acylsphing-4E-enine. The enzyme catalyses (12R)-hydroperoxy-(5Z,8Z,10E,14Z)-eicosatetraenoate = 12-oxo-(5Z,8Z,10E,14Z)-eicosatetraenoate + H2O. The catalysed reaction is (12S)-hydroperoxy-(5Z,8Z,10E,14Z)-eicosatetraenoate = 12-oxo-(5Z,8Z,10E,14Z)-eicosatetraenoate + H2O. It catalyses the reaction (15S)-hydroperoxy-(5Z,8Z,11Z,13E)-eicosatetraenoate = 15-oxo-(5Z,8Z,11Z,13E)-eicosatetraenoate + H2O. It carries out the reaction (13S)-hydroperoxy-(9Z,11E)-octadecadienoate = 13-oxo-(9Z,11E)-octadecadienoate + H2O. The enzyme catalyses (8S)-hydroperoxy-(5Z,9E,11Z,14Z)-eicosatetraenoate = (10R)-hydroxy-(8S,9S)-epoxy-(5Z,11Z,14Z)-eicosatrienoate. The catalysed reaction is (8R)-hydroperoxy-(5Z,9E,11Z,14Z)-eicosatetraenoate = 8-oxo-(5Z,9E,11Z,14Z)-eicosatetraenoate + H2O. It catalyses the reaction (8S)-hydroperoxy-(5Z,9E,11Z,14Z)-eicosatetraenoate = 8-oxo-(5Z,9E,11Z,14Z)-eicosatetraenoate + H2O. It participates in lipid metabolism; hydroperoxy eicosatetraenoic acid biosynthesis. Its pathway is lipid metabolism; sphingolipid metabolism. Its function is as follows. Non-heme iron-containing lipoxygenase which is atypical in that it displays a prominent hydroperoxide isomerase activity and a reduced lipoxygenases activity. The hydroperoxide isomerase activity catalyzes the isomerization of hydroperoxides, derived from arachidonic and linoleic acid by ALOX12B, into hepoxilin-type epoxyalcohols and ketones. In presence of oxygen, oxygenates polyunsaturated fatty acids, including arachidonic acid, to produce fatty acid hydroperoxides. In the skin, acts downstream of ALOX12B on the linoleate moiety of esterified omega-hydroxyacyl-sphingosine (EOS) ceramides to produce an epoxy-ketone derivative, a crucial step in the conjugation of omega-hydroxyceramide to membrane proteins. Therefore plays a crucial role in the synthesis of corneocytes lipid envelope and the establishment of the skin barrier to water loss. In parallel, it may have a signaling function in barrier formation through the production of hepoxilins metabolites. Also plays a role in adipocyte differentiation through hepoxilin A3 and hepoxilin B3 production which in turn activate PPARG. Through the production of hepoxilins in the spinal cord, it may regulate inflammatory tactile allodynia. In Rattus norvegicus (Rat), this protein is Hydroperoxide isomerase ALOXE3.